The following is a 139-amino-acid chain: Protein archease (139 aa).

Ca(2+) is bound by residues Asp12, Asp138, and Ile139.

This sequence belongs to the archease family.

Its function is as follows. Activates the tRNA-splicing ligase complex by facilitating the enzymatic turnover of catalytic subunit RtcB. Acts by promoting the guanylylation of RtcB, a key intermediate step in tRNA ligation. Can also alter the NTP specificity of RtcB such that ATP, dGTP or ITP is used efficiently. This is Protein archease from Saccharolobus islandicus (strain L.S.2.15 / Lassen #1) (Sulfolobus islandicus).